We begin with the raw amino-acid sequence, 355 residues long: 3-isopropylmalate dehydrogenase (355 aa).

Residues Arg90, Arg100, Arg128, and Asp222 each coordinate substrate. Mg(2+) contacts are provided by Asp222, Asp246, and Asp250. 280–292 (GSAPDIAGKGVAN) is an NAD(+) binding site.

Belongs to the isocitrate and isopropylmalate dehydrogenases family. LeuB type 1 subfamily. In terms of assembly, homodimer. It depends on Mg(2+) as a cofactor. Mn(2+) is required as a cofactor.

The protein resides in the cytoplasm. It catalyses the reaction (2R,3S)-3-isopropylmalate + NAD(+) = 4-methyl-2-oxopentanoate + CO2 + NADH. Its pathway is amino-acid biosynthesis; L-leucine biosynthesis; L-leucine from 3-methyl-2-oxobutanoate: step 3/4. Its function is as follows. Catalyzes the oxidation of 3-carboxy-2-hydroxy-4-methylpentanoate (3-isopropylmalate) to 3-carboxy-4-methyl-2-oxopentanoate. The product decarboxylates to 4-methyl-2 oxopentanoate. In Cupriavidus metallidurans (strain ATCC 43123 / DSM 2839 / NBRC 102507 / CH34) (Ralstonia metallidurans), this protein is 3-isopropylmalate dehydrogenase.